A 310-amino-acid polypeptide reads, in one-letter code: Regulator of microtubule dynamics protein 1 (310 aa).

N6-succinyllysine is present on Lys165. 2 TPR repeats span residues 168–204 and 222–258; these read AICISDVGDYEGIKVKIANAYVIKEHFEKAIELNPKD and PWYQRRIAEVLFANPPSSTYEEALKYFHRAEEVDPNF.

Belongs to the RMDN family. Interacts with microtubules.

The protein resides in the cytoplasm. It localises to the cytoskeleton. Its subcellular location is the spindle. The protein localises to the spindle pole. This chain is Regulator of microtubule dynamics protein 1 (Rmdn1), found in Rattus norvegicus (Rat).